The chain runs to 240 residues: Fatty acid metabolism regulator protein (240 aa).

The HTH gntR-type domain occupies 6 to 74 (KGPASFAEKY…HGKPTRVNNF (69 aa)). The segment at residues 34 to 53 (ERELSELIGVTRTTLREVLQ) is a DNA-binding region (H-T-H motif).

In terms of assembly, homodimer.

It localises to the cytoplasm. Functionally, multifunctional regulator of fatty acid metabolism. In Shewanella amazonensis (strain ATCC BAA-1098 / SB2B), this protein is Fatty acid metabolism regulator protein.